The following is a 191-amino-acid chain: MGKKTKRTADSSSSEDEEEYVVEKVLDRRMVKGQVEYLLKWKGFSEEHNTWEPEKNLDCPELISEFMKKYKKMKEGENNKPREKSEGNKRKSSFSNSADDIKSKKKREQSNDIARGFERGLEPEKIIGATDSCGDLMFLMKWKDTDEADLVLAKEANVKCPQIVIAFYEERLTWHAYPEDAENKEKESAKS.

Residues 1-21 are disordered; it reads MGKKTKRTADSSSSEDEEEYV. 4 positions are modified to phosphoserine: Ser-11, Ser-12, Ser-13, and Ser-14. In terms of domain architecture, Chromo 1 spans 20 to 78; the sequence is YVVEKVLDRRMVKGQVEYLLKWKGFSEEHNTWEPEKNLDCPELISEFMKKYKKMKEGEN. Lys-32 participates in a covalent cross-link: Glycyl lysine isopeptide (Lys-Gly) (interchain with G-Cter in SUMO2). An N6-acetyllysine modification is found at Lys-40. The interval 70–117 is disordered; that stretch reads YKKMKEGENNKPREKSEGNKRKSSFSNSADDIKSKKKREQSNDIARGF. Residues 73-89 show a composition bias toward basic and acidic residues; sequence MKEGENNKPREKSEGNK. Lys-91 participates in a covalent cross-link: Glycyl lysine isopeptide (Lys-Gly) (interchain with G-Cter in SUMO2). Ser-92, Ser-93, Ser-95, and Ser-97 each carry phosphoserine. Glycyl lysine isopeptide (Lys-Gly) (interchain with G-Cter in SUMO2) cross-links involve residues Lys-102, Lys-106, Lys-154, and Lys-184. The region spanning 121–179 is the Chromo 2; shadow subtype domain; the sequence is LEPEKIIGATDSCGDLMFLMKWKDTDEADLVLAKEANVKCPQIVIAFYEERLTWHAYPE.

In terms of assembly, homodimer. Interacts with histone H3 methylated at 'Lys-9'. Interacts (via Chromo 2; shadow subtype domain) with the MIS12 complex subunit NSL1; the interaction is direct, involves dimeric CBX5, and occurs during interphase. Interacts with POGZ; POGZ and PXVXL motif-containing proteins such as INCENP and TRIM28 compete for interaction with CBX5. Interacts with LRIF1 (via PxVxL motif). Interacts with INCENP. Interacts with TRIM24. Interacts (via the chromoshadow domain) with ATRX; the interaction is direct. Interacts (via the chromoshadow domain) with CHAF1A; the interaction is direct. Interacts (via the chromoshadow domain) with LBR; the interaction is direct. Interacts (via the chromoshadow domain) with NIPBL; the interaction is direct. Interacts (via the chromoshadow domain) with SP100; the interaction is direct. Interacts (via the chromoshadow domain) with STAM2; the interaction is direct. Interacts (via the chromoshadow domain) with TRIM28; the interaction is direct. Interacts (via the chromoshadow domain) with CBX3; the interaction is direct. Interacts with PRR14 (via N-terminus). Interacts with RRP1B. Interacts with HNRNPU (via C-terminus); this interaction is, at least in part, RNA-dependent. Interacts with ZNF263; recruited to the SIX3 promoter along with other proteins involved in chromatin modification and transcriptional corepression where it contributes to transcriptional repression. Interacts with AURKB during mitosis. Interacts with CHAMP1. Interacts with BAHD1. Interacts with HP1BP3. Interacts with CHD3. Interacts with CHD4. Interacts with SMYD5. Interacts with KMT5B. Interacts with KMT5C. Phosphorylation of HP1 and LBR may be responsible for some of the alterations in chromatin organization and nuclear structure which occur at various times during the cell cycle. Phosphorylated during interphase and possibly hyper-phosphorylated during mitosis. Post-translationally, ubiquitinated.

It is found in the nucleus. The protein localises to the chromosome. The protein resides in the centromere. Functionally, component of heterochromatin that recognizes and binds histone H3 tails methylated at 'Lys-9' (H3K9me), leading to epigenetic repression. In contrast, it is excluded from chromatin when 'Tyr-41' of histone H3 is phosphorylated (H3Y41ph). May contribute to the association of heterochromatin with the inner nuclear membrane by interactions with the lamin-B receptor (LBR). Involved in the formation of kinetochore through interaction with the MIS12 complex subunit NSL1. Required for the formation of the inner centromere. Component of heterochromatin that recognizes and binds histone H3 tails methylated at 'Lys-9' (H3K9me), leading to epigenetic repression. In contrast, it is excluded from chromatin when 'Tyr-41' of histone H3 is phosphorylated (H3Y41ph). Can interact with lamin-B receptor (LBR). This interaction can contribute to the association of the heterochromatin with the inner nuclear membrane. Involved in the formation of functional kinetochore through interaction with MIS12 complex proteins. The protein is Chromobox protein homolog 5 (Cbx5) of Mus musculus (Mouse).